The following is a 328-amino-acid chain: Malate dehydrogenase (328 aa).

Residue Gly12–Gly18 participates in NAD(+) binding. Residues Arg93 and Arg99 each contribute to the substrate site. NAD(+)-binding positions include Asn106, Gln113, and Val130–Asn132. The substrate site is built by Asn132 and Arg166. The Proton acceptor role is filled by His191.

The protein belongs to the LDH/MDH superfamily. MDH type 2 family.

The enzyme catalyses (S)-malate + NAD(+) = oxaloacetate + NADH + H(+). Catalyzes the reversible oxidation of malate to oxaloacetate. The protein is Malate dehydrogenase of Dechloromonas aromatica (strain RCB).